Here is a 289-residue protein sequence, read N- to C-terminus: 4-hydroxy-tetrahydrodipicolinate synthase (289 aa).

Threonine 45 contacts pyruvate. The active-site Proton donor/acceptor is the tyrosine 133. Lysine 161 (schiff-base intermediate with substrate) is an active-site residue. Isoleucine 200 contacts pyruvate.

The protein belongs to the DapA family. As to quaternary structure, homotetramer; dimer of dimers.

The protein resides in the cytoplasm. The catalysed reaction is L-aspartate 4-semialdehyde + pyruvate = (2S,4S)-4-hydroxy-2,3,4,5-tetrahydrodipicolinate + H2O + H(+). The protein operates within amino-acid biosynthesis; L-lysine biosynthesis via DAP pathway; (S)-tetrahydrodipicolinate from L-aspartate: step 3/4. In terms of biological role, catalyzes the condensation of (S)-aspartate-beta-semialdehyde [(S)-ASA] and pyruvate to 4-hydroxy-tetrahydrodipicolinate (HTPA). The polypeptide is 4-hydroxy-tetrahydrodipicolinate synthase (Coxiella burnetii (strain Dugway 5J108-111)).